Consider the following 223-residue polypeptide: UPF0441 protein YgiB (223 aa).

Residues 178–195 are compositionally biased toward low complexity; it reads TVPKTAMAPKPATTTTVT. The disordered stretch occupies residues 178–223; it reads TVPKTAMAPKPATTTTVTRGGFGESVAKQSTMQRSAAGTSTRSMGG. Residues 204 to 223 are compositionally biased toward polar residues; sequence AKQSTMQRSAAGTSTRSMGG.

Belongs to the UPF0441 family.

In Salmonella paratyphi A (strain ATCC 9150 / SARB42), this protein is UPF0441 protein YgiB.